We begin with the raw amino-acid sequence, 678 residues long: Secretin ExeD (678 aa).

The signal sequence occupies residues 1-25 (MINKGKGWRLATVAAALMMAGSAWA). The tract at residues 26–122 (TEYSASFKNA…VVDETNPGIG (97 aa)) is N0. Positions 124–188 (EMVTRVVPVR…EVVRRVDKAG (65 aa)) are N1. The interval 189-264 (DQEVDIIKLK…MVRQLDRDLQ (76 aa)) is N2. The segment at 267–348 (GNTRVFYLKY…ELEQVVAKLD (82 aa)) is N3. The interval 353–602 (QVLVEAIIVE…VFIRPTILRD (250 aa)) is secretin. A s domain region spans residues 604 to 678 (NVYSGISSNK…GVQPFVQGNK (75 aa)).

The protein belongs to the bacterial secretin family. GSP D subfamily. Forms a cylindrical channel with 15 subunits.

The protein resides in the cell outer membrane. Involved in a type II secretion system (T2SS, formerly general secretion pathway, GSP) for the export of proteins. This subunit forms the outer membrane channel. The protein is Secretin ExeD (exeD) of Aeromonas hydrophila.